Reading from the N-terminus, the 622-residue chain is MEGPGLGSQCRNHSHGSHVPGFGRHGICVHENKELAKAKEILPLIEDSSNCDIVKATQYGIFERCKELVEAGYDVRQPDRENVSLLHWAAINNRLELVKFYISKGAVIDQLGGDLNSTPLHWAIRQGHLPMVILLLQHGADPTLIDGEGFSSIHLAVLFQHMPIIAYLISKGQSVNMTDVNGQTPLMLSAYKVIGPEPTGFLLKFNPSLSVVDKTHQNTPLHWAVAAGNVSAVDKLLEAGSSLDIRNAKGETPLDMALQSKNQLISHMLRTEAKMRANKQFRLWRWLHKCELFLLLILSMITLWAVGYILDFNSDSWLLKGCLLVALFFLTSLFPRFLVGYKNLVYLPTVFLLSSIFWIFMTWFILFFPDTAGSPLYFAFIFSIMAFLYFFYKTWATDPGFTKASEEERKVNIVTLAETGSLDFRTFCTSCLIRKPLRSLHCHVCNSCVARFDQHCFWTGRCIGFGNHHHYIFFLLSLSMVCDWIIYGSFVYWSNHCATTFKEDGLWTYLNQIVACSPWVLYIFMLAAFHFSWSTFLLINQLFQIAFLGLTSHERISLLKQSRHMKQTLSLRKTPYNLGFTQNLADFFQCGCFGLVKPCIIDWTSQYTMVFHPAKEKVLRSV.

N-acetylmethionine is present on methionine 1. The Cytoplasmic segment spans residues 1-291 (MEGPGLGSQC…RLWRWLHKCE (291 aa)). ANK repeat units lie at residues 43–78 (PLIEDSSNCDIVKATQYGIFERCKELVEAGYDVRQP), 81–110 (ENVSLLHWAAINNRLELVKFYISKGAVIDQ), 115–144 (LNSTPLHWAIRQGHLPMVILLLQHGADPTL), 148–177 (EGFSSIHLAVLFQHMPIIAYLISKGQSVNM), 181–211 (NGQTPLMLSAYKVIGPEPTGFLLKFNPSLSV), 216–245 (HQNTPLHWAVAAGNVSAVDKLLEAGSSLDI), and 249–277 (KGETPLDMALQSKNQLISHMLRTEAKMRA). Residues 292–312 (LFLLLILSMITLWAVGYILDF) traverse the membrane as a helical segment. Topologically, residues 313–320 (NSDSWLLK) are lumenal. A helical membrane pass occupies residues 321–341 (GCLLVALFFLTSLFPRFLVGY). Topologically, residues 342 to 347 (KNLVYL) are cytoplasmic. Residues 348–368 (PTVFLLSSIFWIFMTWFILFF) traverse the membrane as a helical segment. At 369-371 (PDT) the chain is on the lumenal side. A helical membrane pass occupies residues 372–392 (AGSPLYFAFIFSIMAFLYFFY). The Cytoplasmic portion of the chain corresponds to 393–470 (KTWATDPGFT…RCIGFGNHHH (78 aa)). The DHHC domain occupies 426 to 476 (TFCTSCLIRKPLRSLHCHVCNSCVARFDQHCFWTGRCIGFGNHHHYIFFLL). Catalysis depends on cysteine 456, which acts as the S-palmitoyl cysteine intermediate. A helical membrane pass occupies residues 471-491 (YIFFLLSLSMVCDWIIYGSFV). Topologically, residues 492–518 (YWSNHCATTFKEDGLWTYLNQIVACSP) are lumenal. Residues 519–539 (WVLYIFMLAAFHFSWSTFLLI) traverse the membrane as a helical segment. Topologically, residues 540–622 (NQLFQIAFLG…PAKEKVLRSV (83 aa)) are cytoplasmic.

This sequence belongs to the DHHC palmitoyltransferase family. AKR/ZDHHC17 subfamily. In terms of assembly, interacts (via ANK repeats) with CLIP3. Interacts (via ANK repeats) with DNAJC5 (via C-terminus). Interacts (via ANK repeats) with HTT. Interacts (via ANK repeats) with MAP6. Interacts (via ANK repeats) with SNAP23. Interacts (via ANK repeats) with SNAP25. May interact (via ANK repeats) with SPRED2. Expressed in most adult tissues, but at low levels in the liver, skin, and lung.

It is found in the golgi apparatus membrane. The protein resides in the cytoplasmic vesicle membrane. The catalysed reaction is L-cysteinyl-[protein] + hexadecanoyl-CoA = S-hexadecanoyl-L-cysteinyl-[protein] + CoA. In terms of biological role, palmitoyltransferase that could catalyze the addition of palmitate onto various protein substrates. Palmitoyltransferase for HTT and GAD2. May play a role in Mg(2+) transport. The protein is Palmitoyltransferase ZDHHC13 of Mus musculus (Mouse).